A 215-amino-acid polypeptide reads, in one-letter code: Large ribosomal subunit protein uL3 (215 aa).

Residues 136–155 (GVSISHRSHGSTGQRQDPGK) form a disordered region. Gln151 is subject to N5-methylglutamine.

This sequence belongs to the universal ribosomal protein uL3 family. In terms of assembly, part of the 50S ribosomal subunit. Forms a cluster with proteins L14 and L19. Methylated by PrmB.

Its function is as follows. One of the primary rRNA binding proteins, it binds directly near the 3'-end of the 23S rRNA, where it nucleates assembly of the 50S subunit. In Rickettsia typhi (strain ATCC VR-144 / Wilmington), this protein is Large ribosomal subunit protein uL3.